The sequence spans 256 residues: GTP cyclohydrolase FolE2 (256 aa).

The protein belongs to the GTP cyclohydrolase IV family.

The catalysed reaction is GTP + H2O = 7,8-dihydroneopterin 3'-triphosphate + formate + H(+). The protein operates within cofactor biosynthesis; 7,8-dihydroneopterin triphosphate biosynthesis; 7,8-dihydroneopterin triphosphate from GTP: step 1/1. Converts GTP to 7,8-dihydroneopterin triphosphate. The sequence is that of GTP cyclohydrolase FolE2 from Maridesulfovibrio salexigens (strain ATCC 14822 / DSM 2638 / NCIMB 8403 / VKM B-1763) (Desulfovibrio salexigens).